The primary structure comprises 969 residues: RNA polymerase-associated protein RapA (969 aa).

The region spanning Glu162–Asp339 is the Helicase ATP-binding domain. Asp175–Thr182 lines the ATP pocket. A DEAH box motif is present at residues Asp285 to His288. Residues Arg492 to Gly663 enclose the Helicase C-terminal domain.

It belongs to the SNF2/RAD54 helicase family. RapA subfamily. As to quaternary structure, interacts with the RNAP. Has a higher affinity for the core RNAP than for the holoenzyme. Its ATPase activity is stimulated by binding to RNAP.

In terms of biological role, transcription regulator that activates transcription by stimulating RNA polymerase (RNAP) recycling in case of stress conditions such as supercoiled DNA or high salt concentrations. Probably acts by releasing the RNAP, when it is trapped or immobilized on tightly supercoiled DNA. Does not activate transcription on linear DNA. Probably not involved in DNA repair. The chain is RNA polymerase-associated protein RapA from Actinobacillus pleuropneumoniae serotype 7 (strain AP76).